The chain runs to 58 residues: Preprotein translocase subunit SecG (58 aa).

Residues 1–33 (MARRRKYEGLNPFVAAGLIKFSEEGELEKIKLS) lie on the Cytoplasmic side of the membrane. The helical transmembrane segment at 34–55 (PKAAIAISLAIIAAILALNLLL) threads the bilayer. The Extracellular portion of the chain corresponds to 56–58 (PPP).

This sequence belongs to the SEC61-beta family. As to quaternary structure, component of the protein translocase complex. Heterotrimer consisting of alpha (SecY), beta (SecG) and gamma (SecE) subunits. Can form oligomers of the heterotrimer.

It is found in the cell membrane. In terms of biological role, involved in protein export. The function of the beta subunit is unknown, but it may be involved in stabilization of the trimeric complex. This is Preprotein translocase subunit SecG from Pyrobaculum calidifontis (strain DSM 21063 / JCM 11548 / VA1).